A 110-amino-acid chain; its full sequence is Multidrug transporter EmrE (110 aa).

Transmembrane regions (helical) follow at residues 4 to 21, 34 to 52, 58 to 80, and 87 to 104; these read YIYL…TTLM, VGTI…QTLA, IAYA…GFFG, and AIIG…INLL.

The protein belongs to the drug/metabolite transporter (DMT) superfamily. Small multidrug resistance (SMR) (TC 2.A.7.1) family. Homodimer. Forms an antiparallel dimeric structure. Also forms dimers of homodimers.

It localises to the cell inner membrane. Substrate identity influences both the ground-state and transition-state energies for the conformational exchange process, emphasizing the coupling between substrate binding and transport. In terms of biological role, multidrug efflux protein that confers resistance to a wide range of toxic compounds, including ethidium, methyl viologen, acriflavine, tetraphenylphosphonium (TPP(+)), benzalkonium, propidium, dequalinium and the aminoglycoside antibiotics streptomycin and tobramycin. Can also transport the osmoprotectants betaine and choline. The drug efflux is coupled to an influx of protons. Can couple antiport of a drug to either one or two protons, performing both electrogenic and electroneutral transport of a single substrate. Simultaneously binds and cotransports proton and drug. The protein is Multidrug transporter EmrE (emrE) of Escherichia coli (strain K12).